A 123-amino-acid polypeptide reads, in one-letter code: Probable prefoldin subunit 4 (123 aa).

This sequence belongs to the prefoldin subunit beta family. In terms of assembly, heterohexamer of two PFD-alpha type and four PFD-beta type subunits.

Functionally, binds specifically to cytosolic chaperonin (c-CPN) and transfers target proteins to it. Binds to nascent polypeptide chain and promotes folding in an environment in which there are many competing pathways for nonnative proteins. The sequence is that of Probable prefoldin subunit 4 from Schizosaccharomyces pombe (strain 972 / ATCC 24843) (Fission yeast).